A 341-amino-acid chain; its full sequence is Heme A synthase (341 aa).

5 helical membrane passes run Ala-11–Gly-31, Leu-101–Ala-121, Leu-127–Ser-147, Leu-160–Glu-180, and Ala-194–Val-214. His-259 is a heme binding site. Helical transmembrane passes span Trp-261–Trp-278, Phe-288–Leu-308, and Leu-315–Trp-335. His-319 is a heme binding site.

The protein belongs to the COX15/CtaA family. Type 2 subfamily. Interacts with CtaB. It depends on heme b as a cofactor.

It localises to the cell membrane. It carries out the reaction Fe(II)-heme o + 2 A + H2O = Fe(II)-heme a + 2 AH2. Its pathway is porphyrin-containing compound metabolism; heme A biosynthesis; heme A from heme O: step 1/1. In terms of biological role, catalyzes the conversion of heme O to heme A by two successive hydroxylations of the methyl group at C8. The first hydroxylation forms heme I, the second hydroxylation results in an unstable dihydroxymethyl group, which spontaneously dehydrates, resulting in the formyl group of heme A. This chain is Heme A synthase, found in Maricaulis maris (strain MCS10) (Caulobacter maris).